The primary structure comprises 115 residues: Large ribosomal subunit protein bL20 (115 aa).

It belongs to the bacterial ribosomal protein bL20 family.

Its function is as follows. Binds directly to 23S ribosomal RNA and is necessary for the in vitro assembly process of the 50S ribosomal subunit. It is not involved in the protein synthesizing functions of that subunit. This chain is Large ribosomal subunit protein bL20, found in Borrelia turicatae (strain 91E135).